A 133-amino-acid polypeptide reads, in one-letter code: Protein OPG104 (133 aa).

At 1–111 the chain is on the virion surface side; sequence MTDEQIYAFC…RYLNQEIRYP (111 aa). Residues 112 to 132 form a helical; Signal-anchor membrane-spanning segment; sequence IIDIKWLPIGLLALAILILAF.

This sequence belongs to the orthopoxvirus OPG104 family. Part of a stable entry-fusion complex (EFC) which is at least composed of proteins OPG143, OPG147, OPG155, OPG086, OPG094, OPG107, OPG104, and OPG099. Formation of the viral membrane is necessary for the assembly of the complex.

The protein resides in the virion membrane. In terms of biological role, envelope protein part of the entry-fusion complex responsible for the virus membrane fusion with host cell membrane during virus entry. Also plays a role in cell-cell fusion (syncytium formation). The chain is Protein OPG104 (OPG104) from Variola virus (isolate Human/India/Ind3/1967) (VARV).